The chain runs to 834 residues: Copper-exporting P-type ATPase (834 aa).

HMA domains follow at residues 3 to 64 (QTID…YDAS) and 99 to 162 (DSQQ…YGAE). The Cu(+) site is built by C14, C17, C110, and C113. Helical transmembrane passes span 187–207 (WQAIVALAVGIPVMVWGMIGD), 218–238 (LWLVIGLITLAVMVFAGGHFY), 254–274 (TLVALGTGVAWLYSMSVNLWP), 284–304 (LYYEASAMIIGLINLGHMLEA), 438–458 (AVFVPVVVVIALVSAAIWYFF), and 464–484 (IVYTLVIATTVLIIACPCALG). D523 serves as the catalytic 4-aspartylphosphate intermediate. Residues D720 and D724 each contribute to the Mg(2+) site. A run of 2 helical transmembrane segments spans residues 779–799 (LGAFIYNSIGIPVAAGILWPF) and 801–821 (GTLLNPVVAGAAMALSSITVV).

Belongs to the cation transport ATPase (P-type) (TC 3.A.3) family. Type IB subfamily.

It localises to the cell inner membrane. The protein localises to the cytoplasm. It catalyses the reaction Cu(+)(in) + ATP + H2O = Cu(+)(out) + ADP + phosphate + H(+). Its function is as follows. Involved in Cu(+) export. In terms of biological role, probably also encodes a cytoplasmic copper chaperone CopA(Z) that is produced by programmed ribosomal frameshifting. The sequence is that of Copper-exporting P-type ATPase (copA) from Escherichia coli O157:H7.